Consider the following 140-residue polypeptide: UPF0102 protein Ppro_1186 (140 aa).

Residues 1–27 (MKRPGDGRQESPSSTARPDNRNTGSRG) form a disordered region. Polar residues predominate over residues 10–25 (ESPSSTARPDNRNTGS).

This sequence belongs to the UPF0102 family.

This is UPF0102 protein Ppro_1186 from Pelobacter propionicus (strain DSM 2379 / NBRC 103807 / OttBd1).